Reading from the N-terminus, the 277-residue chain is MAIKKYKPTSNGRRNMTASDFAEITKSTPEKSLLAKKSKTGARNNSGRMTVRHHAGGHKQAYRLVDFKRIKDNTTATVKAIEYDPNRTANIALLVYEDGIKSYILAPKGLKVGDKVQSGPDADIKVGNALPLSNIPEGTLIHNIELKPGKGGQLARSAGTSAQILGKDGKYVIVRLTSGEVRLVLATNRATIGEVGNAEHSLINWGKAGRNRWRGKRPHVRGSVMNPNDHPHGGGEGKAPVGRPSPMSPWGKKTAGKKTRDKKKASTKFIVRGRKSK.

The disordered stretch occupies residues 212-277; the sequence is RWRGKRPHVR…KFIVRGRKSK (66 aa). Basic residues predominate over residues 254-277; the sequence is TAGKKTRDKKKASTKFIVRGRKSK.

The protein belongs to the universal ribosomal protein uL2 family. Part of the 50S ribosomal subunit. Forms a bridge to the 30S subunit in the 70S ribosome.

In terms of biological role, one of the primary rRNA binding proteins. Required for association of the 30S and 50S subunits to form the 70S ribosome, for tRNA binding and peptide bond formation. It has been suggested to have peptidyltransferase activity; this is somewhat controversial. Makes several contacts with the 16S rRNA in the 70S ribosome. The sequence is that of Large ribosomal subunit protein uL2 from Leuconostoc citreum (strain KM20).